We begin with the raw amino-acid sequence, 1180 residues long: Pesticidal crystal protein Cry4Aa (1180 aa).

The protein belongs to the delta endotoxin family.

In terms of biological role, promotes colloidosmotic lysis by binding to the midgut epithelial cells of insects. The sequence is that of Pesticidal crystal protein Cry4Aa (cry4Aa) from Bacillus thuringiensis subsp. israelensis.